Here is a 490-residue protein sequence, read N- to C-terminus: Bifunctional protein HldE (490 aa).

The tract at residues 1 to 328 (MFSFDALLQA…LRRRILPHAS (328 aa)) is ribokinase. 205-208 (NRKE) is an ATP binding site. Asp275 is a catalytic residue. Positions 358 to 490 (FTNGCFDILH…LVARAREGQS (133 aa)) are cytidylyltransferase.

This sequence in the N-terminal section; belongs to the carbohydrate kinase PfkB family. The protein in the C-terminal section; belongs to the cytidylyltransferase family. In terms of assembly, homodimer.

It catalyses the reaction D-glycero-beta-D-manno-heptose 7-phosphate + ATP = D-glycero-beta-D-manno-heptose 1,7-bisphosphate + ADP + H(+). The catalysed reaction is D-glycero-beta-D-manno-heptose 1-phosphate + ATP + H(+) = ADP-D-glycero-beta-D-manno-heptose + diphosphate. The protein operates within nucleotide-sugar biosynthesis; ADP-L-glycero-beta-D-manno-heptose biosynthesis; ADP-L-glycero-beta-D-manno-heptose from D-glycero-beta-D-manno-heptose 7-phosphate: step 1/4. It participates in nucleotide-sugar biosynthesis; ADP-L-glycero-beta-D-manno-heptose biosynthesis; ADP-L-glycero-beta-D-manno-heptose from D-glycero-beta-D-manno-heptose 7-phosphate: step 3/4. In terms of biological role, catalyzes the phosphorylation of D-glycero-D-manno-heptose 7-phosphate at the C-1 position to selectively form D-glycero-beta-D-manno-heptose-1,7-bisphosphate. Catalyzes the ADP transfer from ATP to D-glycero-beta-D-manno-heptose 1-phosphate, yielding ADP-D-glycero-beta-D-manno-heptose. The protein is Bifunctional protein HldE of Rhodopseudomonas palustris (strain TIE-1).